We begin with the raw amino-acid sequence, 367 residues long: Protein RecA (367 aa).

Residues 1–14 (MSTEVNANQSPNAE) are compositionally biased toward polar residues. Positions 1–24 (MSTEVNANQSPNAESRQEAARSGE) are disordered. A compositionally biased stretch (basic and acidic residues) spans 15–24 (SRQEAARSGE). 84-91 (GPESSGKT) is an ATP binding site. The disordered stretch occupies residues 348–367 (GSEVSSNSMRPLTTANRKAA). Residues 349–367 (SEVSSNSMRPLTTANRKAA) are compositionally biased toward polar residues.

It belongs to the RecA family.

It localises to the cytoplasm. Can catalyze the hydrolysis of ATP in the presence of single-stranded DNA, the ATP-dependent uptake of single-stranded DNA by duplex DNA, and the ATP-dependent hybridization of homologous single-stranded DNAs. It interacts with LexA causing its activation and leading to its autocatalytic cleavage. The protein is Protein RecA of Prochlorococcus marinus (strain MIT 9211).